Reading from the N-terminus, the 359-residue chain is UbiA prenyltransferase domain-containing protein 1 homolog (359 aa).

Over residues 1-16 (MATSSQLLPNGNLSRN) the composition is skewed to polar residues. The segment at 1 to 23 (MATSSQLLPNGNLSRNGKTKTED) is disordered. Helical transmembrane passes span 67 to 89 (ALRP…LAYR), 98 to 118 (LATF…GNVV), 148 to 168 (VVSL…LLAV), 177 to 197 (LALI…GIGF), 200 to 220 (IALG…LFAF), 262 to 284 (IVTL…LLFA), 289 to 311 (FFIF…PQAF), and 335 to 355 (FFFG…PTFG).

Belongs to the UbiA prenyltransferase family.

The protein resides in the mitochondrion membrane. It functions in the pathway quinol/quinone metabolism; menaquinone biosynthesis. Its function is as follows. Prenyltransferase that mediates the formation of menaquinone-4 (MK-4), a vitamin K2 isoform, thereby acting as a mitochondrial electron carrier. Mediates the conversion of phylloquinone (PK) into MK-4, probably by cleaving the side chain of phylloquinone (PK) to release 2-methyl-1,4-naphthoquinone (menadione; K3) and then prenylating it with geranylgeranyl pyrophosphate (GGPP) to form MK-4. MK-4 acts as a membrane electron carrier downstream of a electron transport chain complex, improving mitochondrial oxygen consumption. The protein is UbiA prenyltransferase domain-containing protein 1 homolog (heix) of Drosophila melanogaster (Fruit fly).